A 226-amino-acid polypeptide reads, in one-letter code: MSWVQAASLIQGPGDKGDVFDEEADESLLAQREWQSNMQRRVKEGYRDGIDAGKAVTLQQGFNQGYKKGAEVILNYGRLRGTLSALLSWCHLHNNNSTLINKINNLLDAVGQCEEYVLKHLKSITPPSHVVDLLDSIEDMDLCHVVPAEKKIDEAKDERLCENNAEFNKNCSKSHSGIDCSYVECCRTQEHAHSENPSPTWILEQTASLVKQLGLSVDVLQHLKQL.

Residues 45–85 (GYRDGIDAGKAVTLQQGFNQGYKKGAEVILNYGRLRGTLSA) form a deca-GX3 motif; required for interaction with LTO1 region.

In terms of assembly, forms a complex with LTO1.

It localises to the cytoplasm. The protein resides in the nucleus. The complex LTO1:YAE1 functions as a target specific adapter that probably recruits apo-ABCE1 to the cytosolic iron-sulfur protein assembly (CIA) complex machinery. May be required for biogenesis of the large ribosomal subunit and initiation of translation. The chain is Protein YAE1 homolog from Homo sapiens (Human).